Consider the following 506-residue polypeptide: Maturase K (506 aa).

The protein belongs to the intron maturase 2 family. MatK subfamily.

The protein localises to the plastid. Its subcellular location is the chloroplast. In terms of biological role, usually encoded in the trnK tRNA gene intron. Probably assists in splicing its own and other chloroplast group II introns. The sequence is that of Maturase K from Rhododendron ferrugineum (Alpenrose).